The following is a 430-amino-acid chain: Enolase (430 aa).

Gln-163 contributes to the (2R)-2-phosphoglycerate binding site. The active-site Proton donor is Glu-205. Mg(2+) contacts are provided by Asp-242, Glu-287, and Asp-314. Positions 339, 368, 369, and 390 each coordinate (2R)-2-phosphoglycerate. Catalysis depends on Lys-339, which acts as the Proton acceptor.

The protein belongs to the enolase family. Requires Mg(2+) as cofactor.

The protein resides in the cytoplasm. Its subcellular location is the secreted. It localises to the cell surface. The catalysed reaction is (2R)-2-phosphoglycerate = phosphoenolpyruvate + H2O. Its pathway is carbohydrate degradation; glycolysis; pyruvate from D-glyceraldehyde 3-phosphate: step 4/5. Functionally, catalyzes the reversible conversion of 2-phosphoglycerate (2-PG) into phosphoenolpyruvate (PEP). It is essential for the degradation of carbohydrates via glycolysis. The chain is Enolase from Listeria innocua serovar 6a (strain ATCC BAA-680 / CLIP 11262).